The sequence spans 354 residues: Homer protein homolog 1 (354 aa).

One can recognise a WH1 domain in the interval M1–A110. The residue at position 2 (G2) is an N-acetylglycine. Residues K114 to P172 form a disordered region. Polar residues-rich tracts occupy residues S138–G147 and D155–P172. The stretch at K181–E352 forms a coiled coil. The tract at residues K290–S354 is required for tetramerization. At S306 the chain carries Phosphoserine.

Belongs to the Homer family. In terms of assembly, tetramer; this tetrameric structure is critical for forming the high-order complex with SHANK1, which in turn is necessary for the structural and functional integrity of dendritic spines. Interacts with GRM1, GRM5, ITPR1, DNM3, RYR1, RYR2 and SHANK3. Interacts with IFT57 and OPHN1. Encodes a coiled-coil structure that mediates homo- and heteromultimerization. Interacts with SHANK1; forms high-order polymerized complex with a mesh-like network structure, at least composed of SHANK1, HOMER1 and DLGAP1; the complex formation is SHANK1 multimerization dependent. Interacts with NFATC4. Interacts with DAGLA (via PPXXF motif); this interaction is required for the cell membrane localization of DAGLA. Interacts with SRGAP2.

It is found in the cytoplasm. The protein resides in the postsynaptic density. The protein localises to the synapse. It localises to the cell projection. Its subcellular location is the dendritic spine. Its function is as follows. Postsynaptic density scaffolding protein. Binds and cross-links cytoplasmic regions of GRM1, GRM5, ITPR1, DNM3, RYR1, RYR2, SHANK1 and SHANK3. By physically linking GRM1 and GRM5 with ER-associated ITPR1 receptors, it aids the coupling of surface receptors to intracellular calcium release. May also couple GRM1 to PI3 kinase through its interaction with AGAP2. Forms a high-order complex with SHANK1, which in turn is necessary for the structural and functional integrity of dendritic spines. Negatively regulates T cell activation by inhibiting the calcineurin-NFAT pathway. Acts by competing with calcineurin/PPP3CA for NFAT protein binding, hence preventing NFAT activation by PPP3CA. This chain is Homer protein homolog 1, found in Bos taurus (Bovine).